A 554-amino-acid chain; its full sequence is RecBCD enzyme subunit RecD (554 aa).

155–162 (GGPGTGKT) serves as a coordination point for ATP.

Belongs to the RecD family. Heterotrimer of RecB, RecC and RecD. All subunits contribute to DNA-binding.

It carries out the reaction Couples ATP hydrolysis with the unwinding of duplex DNA at the replication fork by translocating in the 5'-3' direction. This creates two antiparallel DNA single strands (ssDNA). The leading ssDNA polymer is the template for DNA polymerase III holoenzyme which synthesizes a continuous strand.. The enzyme catalyses ATP + H2O = ADP + phosphate + H(+). Its function is as follows. A helicase/nuclease that prepares dsDNA breaks (DSB) for recombinational DNA repair. Binds to DSBs and unwinds DNA via a highly rapid and processive ATP-dependent bidirectional helicase activity. Holoenzyme degrades any linearized DNA that is unable to undergo homologous recombination. In the holoenzyme this subunit has ssDNA-dependent ATPase and 5'-3' helicase activity. When added to pre-assembled RecBC greatly stimulates nuclease activity and augments holoenzyme processivity. Unlike the case in E.coli, suppresses RecA-dependent homologous recombination, is instead required for single-strand annealing pathway repair of DSB. The sequence is that of RecBCD enzyme subunit RecD from Mycolicibacterium smegmatis (strain ATCC 700084 / mc(2)155) (Mycobacterium smegmatis).